The following is a 123-amino-acid chain: S-adenosylmethionine decarboxylase proenzyme 2 (123 aa).

Residue S65 is the Schiff-base intermediate with substrate; via pyruvic acid of the active site. A Pyruvic acid (Ser); by autocatalysis modification is found at S65. Catalysis depends on H70, which acts as the Proton acceptor; for processing activity. C85 (proton donor; for catalytic activity) is an active-site residue.

The protein belongs to the prokaryotic AdoMetDC family. Type 1 subfamily. In terms of assembly, heterotetramer of two alpha and two beta chains arranged as a dimer of alpha/beta heterodimers. Pyruvate is required as a cofactor. Post-translationally, is synthesized initially as an inactive proenzyme. Formation of the active enzyme involves a self-maturation process in which the active site pyruvoyl group is generated from an internal serine residue via an autocatalytic post-translational modification. Two non-identical subunits are generated from the proenzyme in this reaction, and the pyruvate is formed at the N-terminus of the alpha chain, which is derived from the carboxyl end of the proenzyme. The post-translation cleavage follows an unusual pathway, termed non-hydrolytic serinolysis, in which the side chain hydroxyl group of the serine supplies its oxygen atom to form the C-terminus of the beta chain, while the remainder of the serine residue undergoes an oxidative deamination to produce ammonia and the pyruvoyl group blocking the N-terminus of the alpha chain.

The enzyme catalyses S-adenosyl-L-methionine + H(+) = S-adenosyl 3-(methylsulfanyl)propylamine + CO2. Its pathway is amine and polyamine biosynthesis; S-adenosylmethioninamine biosynthesis; S-adenosylmethioninamine from S-adenosyl-L-methionine: step 1/1. In terms of biological role, catalyzes the decarboxylation of S-adenosylmethionine to S-adenosylmethioninamine (dcAdoMet), the propylamine donor required for the synthesis of the polyamines spermine and spermidine from the diamine putrescine. This is S-adenosylmethionine decarboxylase proenzyme 2 from Bacillus anthracis.